Reading from the N-terminus, the 118-residue chain is Putative pterin-4-alpha-carbinolamine dehydratase (118 aa).

Belongs to the pterin-4-alpha-carbinolamine dehydratase family.

It carries out the reaction (4aS,6R)-4a-hydroxy-L-erythro-5,6,7,8-tetrahydrobiopterin = (6R)-L-erythro-6,7-dihydrobiopterin + H2O. This Xanthomonas axonopodis pv. citri (strain 306) protein is Putative pterin-4-alpha-carbinolamine dehydratase (phhB).